The following is a 196-amino-acid chain: Heat shock protein beta-8 (196 aa).

The interval 1-28 is disordered; the sequence is MADGQLPFPCSYPSRLRRDPFRDSPLSS. 2 positions are modified to phosphoserine: serine 24 and serine 57. Threonine 63 is subject to Phosphothreonine. 2 positions are modified to asymmetric dimethylarginine: arginine 71 and arginine 78. Residues 74-185 enclose the sHSP domain; sequence TATARFGVPA…PFGESSFNNE (112 aa). A disordered region spans residues 176-196; it reads PFGESSFNNELPQDNQEVTCS. Polar residues predominate over residues 178–196; the sequence is GESSFNNELPQDNQEVTCS.

It belongs to the small heat shock protein (HSP20) family. Monomer. Forms a ternary complex with BAG3 and HSPA1A. Component of the chaperone-assisted selective autophagy (CASA) complex consisting of BAG3, HSPA8/HSC70, HSPB8 and STUB1/CHIP. Interacts with HSPB1. Interacts with DNAJB6. Interacts with BAG3. Phosphorylated.

The protein localises to the cytoplasm. The protein resides in the nucleus. Its function is as follows. Involved in the chaperone-assisted selective autophagy (CASA), a crucial process for protein quality control, particularly in mechanical strained cells and tissues such as muscle. Displays temperature-dependent chaperone activity. The protein is Heat shock protein beta-8 (Hspb8) of Rattus norvegicus (Rat).